The chain runs to 342 residues: Holliday junction branch migration complex subunit RuvB (342 aa).

Positions 1 to 179 (MTNILSPEKI…FGIPMRLNFY (179 aa)) are large ATPase domain (RuvB-L). ATP is bound by residues Ile-18, Arg-19, Gly-60, Lys-63, Thr-64, Thr-65, 126–128 (EDF), Arg-169, Tyr-179, and Arg-216. Mg(2+) is bound at residue Thr-64. Positions 180-250 (NTEELKKVLN…ISDFGLNRLE (71 aa)) are small ATPAse domain (RuvB-S). The head domain (RuvB-H) stretch occupies residues 253 to 342 (HIGLDSNDYR…HQFNIFNENE (90 aa)). 3 residues coordinate DNA: Arg-289, Arg-308, and Arg-313.

Belongs to the RuvB family. As to quaternary structure, homohexamer. Forms an RuvA(8)-RuvB(12)-Holliday junction (HJ) complex. HJ DNA is sandwiched between 2 RuvA tetramers; dsDNA enters through RuvA and exits via RuvB. An RuvB hexamer assembles on each DNA strand where it exits the tetramer. Each RuvB hexamer is contacted by two RuvA subunits (via domain III) on 2 adjacent RuvB subunits; this complex drives branch migration. In the full resolvosome a probable DNA-RuvA(4)-RuvB(12)-RuvC(2) complex forms which resolves the HJ.

The protein localises to the cytoplasm. It catalyses the reaction ATP + H2O = ADP + phosphate + H(+). The RuvA-RuvB-RuvC complex processes Holliday junction (HJ) DNA during genetic recombination and DNA repair, while the RuvA-RuvB complex plays an important role in the rescue of blocked DNA replication forks via replication fork reversal (RFR). RuvA specifically binds to HJ cruciform DNA, conferring on it an open structure. The RuvB hexamer acts as an ATP-dependent pump, pulling dsDNA into and through the RuvAB complex. RuvB forms 2 homohexamers on either side of HJ DNA bound by 1 or 2 RuvA tetramers; 4 subunits per hexamer contact DNA at a time. Coordinated motions by a converter formed by DNA-disengaged RuvB subunits stimulates ATP hydrolysis and nucleotide exchange. Immobilization of the converter enables RuvB to convert the ATP-contained energy into a lever motion, pulling 2 nucleotides of DNA out of the RuvA tetramer per ATP hydrolyzed, thus driving DNA branch migration. The RuvB motors rotate together with the DNA substrate, which together with the progressing nucleotide cycle form the mechanistic basis for DNA recombination by continuous HJ branch migration. Branch migration allows RuvC to scan DNA until it finds its consensus sequence, where it cleaves and resolves cruciform DNA. This chain is Holliday junction branch migration complex subunit RuvB, found in Rickettsia felis (strain ATCC VR-1525 / URRWXCal2) (Rickettsia azadi).